Reading from the N-terminus, the 176-residue chain is Nucleoside triphosphate/diphosphate phosphatase (176 aa).

Residue arginine 23 is the Proton donor of the active site. Positions 87, 103, 105, 107, 120, and 123 each coordinate Mg(2+).

It belongs to the Ntdp family. It depends on Mg(2+) as a cofactor.

The catalysed reaction is a ribonucleoside 5'-triphosphate + H2O = a ribonucleoside 5'-diphosphate + phosphate + H(+). It catalyses the reaction a ribonucleoside 5'-diphosphate + H2O = a ribonucleoside 5'-phosphate + phosphate + H(+). In terms of biological role, has nucleoside phosphatase activity towards nucleoside triphosphates and nucleoside diphosphates. This Bacillus cereus (strain AH820) protein is Nucleoside triphosphate/diphosphate phosphatase.